A 454-amino-acid chain; its full sequence is Protein odr-4 homolog (454 aa).

2 helical membrane passes run 82-102 (MLPG…ELAN) and 432-452 (IGVI…FHYF).

This sequence belongs to the ODR-4 family.

The protein resides in the membrane. May play a role in the trafficking of a subset of G-protein coupled receptors. The polypeptide is Protein odr-4 homolog (ODR4) (Pongo abelii (Sumatran orangutan)).